The primary structure comprises 295 residues: Ethanolamine ammonia-lyase small subunit (295 aa).

Residues valine 208 and glutamate 229 each coordinate adenosylcob(III)alamin.

This sequence belongs to the EutC family. The basic unit is a heterodimer which dimerizes to form tetramers. The heterotetramers trimerize; 6 large subunits form a core ring with 6 small subunits projecting outwards. Adenosylcob(III)alamin is required as a cofactor.

The protein resides in the bacterial microcompartment. The enzyme catalyses ethanolamine = acetaldehyde + NH4(+). It functions in the pathway amine and polyamine degradation; ethanolamine degradation. Catalyzes the deamination of various vicinal amino-alcohols to oxo compounds. Allows this organism to utilize ethanolamine as the sole source of nitrogen and carbon in the presence of external vitamin B12. This is Ethanolamine ammonia-lyase small subunit from Fusobacterium nucleatum subsp. nucleatum (strain ATCC 25586 / DSM 15643 / BCRC 10681 / CIP 101130 / JCM 8532 / KCTC 2640 / LMG 13131 / VPI 4355).